A 268-amino-acid chain; its full sequence is Proenkephalin-A (268 aa).

A signal peptide spans 1-24; it reads MARLLRLCTWLVALGPGLLATVQA. 3 disulfide bridges follow: cysteine 26-cysteine 48, cysteine 30-cysteine 52, and cysteine 33-cysteine 65. Positions 163-184 are disordered; the sequence is TGDDRDRENHHQEGGDSDEGVS. Positions 164 to 176 are enriched in basic and acidic residues; the sequence is GDDRDRENHHQEG. 2 consecutive propeptides follow at residues 197 to 208 and 218 to 228; these read SPQVEDEAKELQ and VGRPEWWMDYQ. Serine 252 carries the phosphoserine modification.

Belongs to the opioid neuropeptide precursor family. In terms of processing, proenkephalin-A is cleaved by CTSL to generate Met-enkephalin. Post-translationally, processed and degraded by ACE. Probably cleaved by ACE. In terms of processing, processed by ACE to generate Met-enkephalin in the nucleus accumbens of the brain. Post-translationally, the N-terminal domain contains 6 conserved cysteines thought to be involved in disulfide bonding and/or processing.

It is found in the cytoplasmic vesicle. The protein resides in the secretory vesicle. It localises to the chromaffin granule lumen. Its subcellular location is the secreted. In terms of biological role, neuropeptide that competes with and mimic the effects of opiate drugs. They play a role in a number of physiologic functions, including pain perception and responses to stress. Met-enkephalin-Arg-Phe neuropeptide acts as a strong ligand of Mu-type opioid receptor OPRM1. Met-enkephalin-Arg-Phe-binding to OPRM1 in the nucleus accumbens of the brain increases activation of OPRM1, leading to long-term synaptic depression of glutamate release. Functionally, increases glutamate release in the striatum and decreases GABA concentration in the striatum. Its function is as follows. Increases glutamate release in the striatum. The protein is Proenkephalin-A (PENK) of Cavia porcellus (Guinea pig).